The primary structure comprises 490 residues: Probable cytosol aminopeptidase (490 aa).

Residues K256 and D261 each coordinate Mn(2+). Residue K268 is part of the active site. Mn(2+) contacts are provided by D280, D340, and E342. The active site involves R344.

It belongs to the peptidase M17 family. Requires Mn(2+) as cofactor.

The protein localises to the cytoplasm. The enzyme catalyses Release of an N-terminal amino acid, Xaa-|-Yaa-, in which Xaa is preferably Leu, but may be other amino acids including Pro although not Arg or Lys, and Yaa may be Pro. Amino acid amides and methyl esters are also readily hydrolyzed, but rates on arylamides are exceedingly low.. It catalyses the reaction Release of an N-terminal amino acid, preferentially leucine, but not glutamic or aspartic acids.. In terms of biological role, presumably involved in the processing and regular turnover of intracellular proteins. Catalyzes the removal of unsubstituted N-terminal amino acids from various peptides. The sequence is that of Probable cytosol aminopeptidase from Prochlorococcus marinus (strain MIT 9313).